A 476-amino-acid chain; its full sequence is Scopoletin glucosyltransferase (476 aa).

Residue H16 is the Proton acceptor of the active site. H16 is an an anthocyanidin binding site. D119 (charge relay) is an active-site residue. Residues A343, Q345, H360, W363, N364, S365, and E368 each contribute to the UDP-alpha-D-glucose site. An anthocyanidin is bound at residue A383. UDP-alpha-D-glucose is bound by residues E384 and Q385.

The protein belongs to the UDP-glycosyltransferase family.

The catalysed reaction is scopoletin + UDP-alpha-D-glucose = scopolin + UDP + H(+). Functionally, glucosyltransferase acting preferentially on aromatic substrates of the phenylpropanoid types. The best substrates are scopoletin and esculetin. Required for full resistance to virus. In Nicotiana tabacum (Common tobacco), this protein is Scopoletin glucosyltransferase (TOGT1).